A 221-amino-acid polypeptide reads, in one-letter code: Small ribosomal subunit protein uS5 (221 aa).

The region spanning 46–109 (LKDEVINIER…DNAKLNIIEI (64 aa)) is the S5 DRBM domain.

It belongs to the universal ribosomal protein uS5 family. In terms of assembly, part of the 30S ribosomal subunit. Contacts protein S4.

Its function is as follows. With S4 and S12 plays an important role in translational accuracy. The chain is Small ribosomal subunit protein uS5 from Picrophilus torridus (strain ATCC 700027 / DSM 9790 / JCM 10055 / NBRC 100828 / KAW 2/3).